Here is a 238-residue protein sequence, read N- to C-terminus: Adapter protein MecA (238 aa).

The segment at 108 to 133 (EDENEESVQGNQQQRRSHASDHSKRA) is disordered.

Belongs to the MecA family. Homodimer.

Its function is as follows. Enables the recognition and targeting of unfolded and aggregated proteins to the ClpC protease or to other proteins involved in proteolysis. This is Adapter protein MecA from Staphylococcus carnosus (strain TM300).